We begin with the raw amino-acid sequence, 740 residues long: E3 ubiquitin-protein ligase TRIM9 (740 aa).

The RING-type; degenerate zinc-finger motif lies at 7–30 (CPTCKQLYANPVLLPCFHALCLGC). Gly residues predominate over residues 64 to 73 (GNGGGAGGGA). Residues 64–114 (GNGGGAGGGAAAPVTNPNGPGTRHSSHSSAASTASSNTGSESVTSDQDQSD) are disordered. A compositionally biased stretch (low complexity) spans 74-105 (AAPVTNPNGPGTRHSSHSSAASTASSNTGSES). The segment at 195 to 244 (REALRCQMCETDPKVASLICEQCEIRYCDACRELTHPARGPLAKHTLVKP) adopts a B box-type 1; atypical zinc-finger fold. Zn(2+) is bound by residues cysteine 200, cysteine 203, cysteine 225, histidine 230, cysteine 255, histidine 258, cysteine 277, and histidine 283. The segment at 250-291 (QRESVCGEHEETLSQYCLSCKAPACGLCIGELRHQAHDVQSI) adopts a B box-type 2 zinc-finger fold. Residues 294-324 (TCKAQKTELSHNLQQLSEKARSTTEFIQRLK) are a coiled coil. In terms of domain architecture, COS spans 399 to 459 (LKETDSAAFL…ARAIDNLNFI (61 aa)). The Fibronectin type-III domain maps to 474 to 567 (APMTPTILPS…ELIGLQTAEV (94 aa)). Residues 549–736 (NSAGEGEYSE…TMHTAMDAPK (188 aa)) form the B30.2/SPRY domain.

It belongs to the TRIM/RBCC family. As to quaternary structure, interacts (via fibronectin type-III domain) with pico. Interacts (via SPRY domain) with netrin receptor fra.

It is found in the cell projection. It localises to the axon. Its subcellular location is the perikaryon. The enzyme catalyses S-ubiquitinyl-[E2 ubiquitin-conjugating enzyme]-L-cysteine + [acceptor protein]-L-lysine = [E2 ubiquitin-conjugating enzyme]-L-cysteine + N(6)-ubiquitinyl-[acceptor protein]-L-lysine.. The protein operates within protein modification; protein ubiquitination. In terms of biological role, E3 ubiquitin-protein ligase activity. During embryonic and larval development, regulates the pattern of axonal projections of class IV nociceptive sensory neurons (C4da) downstream of netrin receptor fra. Regulates fine-scale topography of C4da axon terminals upon neuronal activity. During eye development, consolidates the attachment of R8 photoreceptor growth cones to the target medulla layer, probably downstream of fra. The protein is E3 ubiquitin-protein ligase TRIM9 of Drosophila melanogaster (Fruit fly).